A 387-amino-acid chain; its full sequence is Acetylserotonin O-methyltransferase (387 aa).

Residues Tyr153, Trp170, Glu216, 246-248, and Arg263 each bind S-adenosyl-L-methionine; that span reads GDF. His266 functions as the Proton donor/acceptor in the catalytic mechanism. Residues Asp267 and Gln317 each contribute to the substrate site. Residues 354–387 are disordered; it reads AARGGGAGARSDGGGGDATSQTGSGTGSEVGAQD. Residues 356–370 show a composition bias toward gly residues; sequence RGGGAGARSDGGGGD.

It belongs to the class I-like SAM-binding methyltransferase superfamily. Cation-independent O-methyltransferase family. In terms of assembly, homodimer. Expressed predominantly in the pineal gland (at protein level). Very low expression, if any, in the retina.

It carries out the reaction N-acetylserotonin + S-adenosyl-L-methionine = melatonin + S-adenosyl-L-homocysteine + H(+). It functions in the pathway aromatic compound metabolism; melatonin biosynthesis; melatonin from serotonin: step 1/2. Functionally, catalyzes the transfer of a methyl group onto N-acetylserotonin, producing melatonin (N-acetyl-5-methoxytryptamine). This Mus musculus (Mouse) protein is Acetylserotonin O-methyltransferase (Asmt).